The sequence spans 522 residues: Nitrogen fixation protein VnfA (522 aa).

The tract at residues 22-183 (LLYEMSQIAT…AQAVELYLVE (162 aa)) is a domain. The region spanning 35 to 177 (DLSSIISILL…ILATTTAQAV (143 aa)) is the GAF domain. One can recognise a Sigma-54 factor interaction domain in the interval 210–439 (IIGNSKPMLE…LENVIERAML (230 aa)). ATP contacts are provided by residues 238-245 (GESGVGKE) and 301-310 (AAGGTIFLDE). The segment at residues 493–512 (MTEAATHLGLTARVLGLRMG) is a DNA-binding region (H-T-H motif).

In terms of biological role, required for the expression of the V-dependent nitrogen fixation system in Azotobacter vinelandii. It is required for the regulation of nitrogenase 2 transcription. Interacts with sigma-54. The sequence is that of Nitrogen fixation protein VnfA (vnfA) from Azotobacter vinelandii.